Here is a 451-residue protein sequence, read N- to C-terminus: MELEKIRAIISADAARRQEILQAKSYYYNKNDILKKGVVVQNRDENPLRNADNRISHNFHEILVDEKASYMFTYPVLFDIDNNKELNEKVTDVLGNEFTRKAKNLAIEASNCGSAWLHYWIDEEYSGEQVTNQTFKYGVVNTEEIIPIYRNGIERELEAVIRYYIQLEDVKGQIQKQAYTYVEFWTDKILDKYKFFGVSCCGSQIEHITVQHRFNSVPFVEFSNNIKKQSDLSKYKKILDLYDRVMSGFANDLEDIQQIIYILENFGGEDTSEFLKELKRYKTIKTETDSEGDSGGLKTMQIEIPTEARKIILEILKKQIYESGQGLQQDTENFGNASGVALKFFYRKLELKSGLLETEFRTSFDKLIKAILYFLGVTDYKKIQQTYTRNMMSNDLEDADIATKSVGIIPTKIILRHHPWVDDVEEAEKLYLEEKKIQASKVSDDYNNFTE.

Belongs to the SPP1-like portal protein family. As to quaternary structure, homododecamer.

It localises to the virion. Functionally, forms the portal vertex of the capsid. This portal plays critical roles in head assembly, genome packaging, neck/tail attachment, and genome ejection. The portal protein multimerizes as a single ring-shaped homododecamer arranged around a central channel. Binds to the terminase subunits to form the packaging machine. The protein is Portal protein of Clostridium phage phiCD119 (strain Clostridium difficile/United States/Govind/2006) (Bacteriophage phiCD119).